Consider the following 271-residue polypeptide: Ribonuclease 3 (271 aa).

Residues Pro-5 to Gly-139 enclose the RNase III domain. Glu-52 contacts Mg(2+). Asp-56 is a catalytic residue. Mg(2+)-binding residues include Asp-125 and Glu-128. Glu-128 is a catalytic residue. Positions Asn-172–Gly-241 constitute a DRBM domain. The segment at Gly-241–Thr-271 is disordered. A compositionally biased stretch (acidic residues) spans Ser-251 to Asp-261.

Belongs to the ribonuclease III family. As to quaternary structure, homodimer. Requires Mg(2+) as cofactor.

It localises to the cytoplasm. The catalysed reaction is Endonucleolytic cleavage to 5'-phosphomonoester.. Functionally, digests double-stranded RNA. Involved in the processing of primary rRNA transcript to yield the immediate precursors to the large and small rRNAs (23S and 16S). Processes some mRNAs, and tRNAs when they are encoded in the rRNA operon. Processes pre-crRNA and tracrRNA of type II CRISPR loci if present in the organism. In Solibacter usitatus (strain Ellin6076), this protein is Ribonuclease 3.